Here is a 424-residue protein sequence, read N- to C-terminus: GTPase Obg (424 aa).

The Obg domain maps to 1–158 (MFVDRAEVFV…RYISLELKIL (158 aa)). The disordered stretch occupies residues 21–42 (SFRREKYVPRGGPDGGDGGKGG). Residues 32–42 (GPDGGDGGKGG) are compositionally biased toward gly residues. The 173-residue stretch at 159–331 (ADVGLLGFPN…LMKEAAAMLT (173 aa)) folds into the OBG-type G domain. Residues 165–172 (GFPNVGKS), 190–194 (FTTLS), 212–215 (DIPG), 282–285 (NKAD), and 312–314 (SAA) each bind GTP. Mg(2+) is bound by residues Ser172 and Thr192. One can recognise an OCT domain in the interval 345 to 424 (KFIPEEKRFT…LNDFEFDYIL (80 aa)).

Belongs to the TRAFAC class OBG-HflX-like GTPase superfamily. OBG GTPase family. In terms of assembly, monomer. It depends on Mg(2+) as a cofactor.

It localises to the cytoplasm. Its function is as follows. An essential GTPase which binds GTP, GDP and possibly (p)ppGpp with moderate affinity, with high nucleotide exchange rates and a fairly low GTP hydrolysis rate. Plays a role in control of the cell cycle, stress response, ribosome biogenesis and in those bacteria that undergo differentiation, in morphogenesis control. The sequence is that of GTPase Obg from Clostridium kluyveri (strain NBRC 12016).